The following is a 754-amino-acid chain: Subtilisin-like protease SBT3.12 (754 aa).

The N-terminal stretch at Met-1–Ala-28 is a signal peptide. A propeptide spans Gln-29–Gln-117 (activation peptide). In terms of domain architecture, Inhibitor I9 spans Tyr-39–Leu-116. The 486-residue stretch at Ile-121–Lys-606 folds into the Peptidase S8 domain. Asp-151 functions as the Charge relay system in the catalytic mechanism. Asn-206 is a glycosylation site (N-linked (GlcNAc...) asparagine). The active-site Charge relay system is the His-224. Asn-239 and Asn-369 each carry an N-linked (GlcNAc...) asparagine glycan. Residue Ser-537 is the Charge relay system of the active site. N-linked (GlcNAc...) asparagine glycans are attached at residues Asn-629 and Asn-740.

This sequence belongs to the peptidase S8 family.

Its subcellular location is the secreted. The polypeptide is Subtilisin-like protease SBT3.12 (Arabidopsis thaliana (Mouse-ear cress)).